We begin with the raw amino-acid sequence, 692 residues long: Paramyosin (692 aa).

The interval 1-15 (MNKKRDSELAKLRKL) is nonhelical region. Residues 16 to 692 (LEDVHIESEE…DHRVKELLLQ (677 aa)) are a coiled coil. Positions 26 to 57 (TAHHLRQKHQAAIQEMQDQLDQLQKAKNKSDK) are disordered.

Belongs to the paramyosin family. In terms of assembly, homodimer.

Its subcellular location is the cytoplasm. The protein resides in the myofibril. Its function is as follows. Paramyosin is a major structural component of many thick filaments isolated from invertebrate muscles. In Dermatophagoides farinae (American house dust mite), this protein is Paramyosin.